The sequence spans 621 residues: MRKTSLALAISALLSALPIASVQANESCTPLTGKEAGLDTGRSSAVRCLPGINPLQDLLNSGQNAFSPRGGMAGNDLNLWWAHRTEVLGQGINVAVVDDGLAIAHPDLADNVRPGSKNVVTGGSDPTPTDPDRCPRHSVSGIIAAVDNSIGTLGVAPRVQLQGFNLLDDNIQQLQKDWLYALGQRRHRRQPGLQPELRMSLVDPEGANGLDQVQLDRLFEQRTQHASAAYIKAAGTAFSRIAAGNYVAQPHRNLPKLPFENSNIDPSNSNFWNLVVRAINADGVRSSYSSVGSNVFLSAPGGEYGTDAPAMVTTDLPGCDMGYNRVDDPSTNRLHNNPQLDASCDYNGVMNGTSSATPNTTGAMVLMAPYPDLSVRDLRDLLARNATRLDANQGPVQINYTAANGERRQVTGLEGWERNAAGLWYSPSYGFGLVDVNKTQPCSRQPRTAATTGAVALAKGKGNGRSPSAPSRYVGSSPTRSSTQVDQPLTVEAVQVMVSLDHQRLPDLLIELVSPSGTRSVLLNPNNSLVGQSLDRQQLGYVRTKGLRDMRMLSHKFYGEPAHGEWRLEVTDVANAAAQVSLLDRRTNTRSTLTEGNNSQPGQLLDWSRGYSVLGHDAARS.

An N-terminal signal peptide occupies residues 1–24 (MRKTSLALAISALLSALPIASVQA). In terms of domain architecture, Peptidase S8 spans 68-440 (PRGGMAGNDL…FGLVDVNKTQ (373 aa)). Catalysis depends on D98, which acts as the Charge relay system. The tract at residues 114–133 (PGSKNVVTGGSDPTPTDPDR) is disordered. Catalysis depends on charge relay system residues H137 and S354. Positions 454-619 (AVALAKGKGN…GYSVLGHDAA (166 aa)) constitute a P/Homo B domain. The interval 457–485 (LAKGKGNGRSPSAPSRYVGSSPTRSSTQV) is disordered. The segment covering 465-485 (RSPSAPSRYVGSSPTRSSTQV) has biased composition (polar residues).

The protein belongs to the peptidase S8 family.

Its function is as follows. Agent of furonculosis. The sequence is that of Microbial serine proteinase (aspA) from Aeromonas salmonicida.